The following is a 92-amino-acid chain: Large ribosomal subunit protein eL37 (92 aa).

Cysteine 19, cysteine 22, cysteine 34, and cysteine 37 together coordinate Zn(2+). Residues cysteine 19–cysteine 37 form a C4-type zinc finger. The interval serine 50 to histidine 92 is disordered.

It belongs to the eukaryotic ribosomal protein eL37 family. The cofactor is Zn(2+).

Functionally, binds to the 23S rRNA. This Emericella nidulans (strain FGSC A4 / ATCC 38163 / CBS 112.46 / NRRL 194 / M139) (Aspergillus nidulans) protein is Large ribosomal subunit protein eL37 (rpl37).